Reading from the N-terminus, the 1333-residue chain is ABC transporter ATP-binding protein/permease PDR18 (1333 aa).

The chain crosses the membrane as a helical span at residues 13–33 (FLEGQTFGDILCLPWTIIKGI). Residues 30 to 281 (IKGIRERKNR…FENMGYLCPP (252 aa)) form the ABC transporter 1 domain. 4 N-linked (GlcNAc...) asparagine glycosylation sites follow: Asn48, Asn144, Asn205, and Asn350. 6 helical membrane passes run 392 to 412 (YTVI…SLFY), 425 to 445 (SGVL…NISF), 474 to 494 (FPFR…LAGL), 499 to 519 (GAFF…TSLF), 534 to 554 (SIAG…IQLP), and 642 to 662 (FGIM…FTEY). N-linked (GlcNAc...) asparagine glycans are attached at residues Asn697 and Asn733. Residues 729 to 971 (FIWKNVSFTI…VIKYFEKNGA (243 aa)) form the ABC transporter 2 domain. 765-772 (GESGAGKT) provides a ligand contact to ATP. N-linked (GlcNAc...) asparagine glycosylation is present at Asn958. Helical transmembrane passes span 1071–1091 (LLMI…VNAI), 1092–1112 (GLQN…PATN), 1150–1170 (PYHL…LGVF), 1178–1198 (VFYL…ALMI), 1210–1230 (VIVG…QPAS), and 1235–1255 (FWTF…LVGL). Asn1320 is a glycosylation site (N-linked (GlcNAc...) asparagine).

Belongs to the ABC transporter superfamily. ABCG family. PDR (TC 3.A.1.205) subfamily.

The protein resides in the membrane. This is ABC transporter ATP-binding protein/permease PDR18 (PDR18) from Saccharomyces cerevisiae (strain ATCC 204508 / S288c) (Baker's yeast).